Consider the following 399-residue polypeptide: Protein LIGULELESS 1 (399 aa).

Positions 1 to 28 (MMNLSAAANGRDEFPPYVVPSNAAAPPP) are disordered. Positions 15-24 (PPYVVPSNAA) are enriched in low complexity. The segment at 182–260 (PPRCQAEGCK…ADHNRRRRKS (79 aa)) adopts an SBP-type zinc-finger fold. Zn(2+) contacts are provided by Cys-185, Cys-190, Cys-207, His-210, Cys-227, Cys-230, His-234, and Cys-246. Positions 243 to 259 (KKSCRKRLADHNRRRRK) match the Bipartite nuclear localization signal motif. Residues 250-292 (LADHNRRRRKSKPSDADAGDKKRAHANKAAAAKDKAESSSKNM) form a disordered region. The span at 261–270 (KPSDADAGDK) shows a compositional bias: basic and acidic residues.

As to expression, leaf ligular region, blade and sheath.

The protein resides in the nucleus. In terms of biological role, involved in the formation of ligules and auricles during leaf organogenesis. In Zea mays (Maize), this protein is Protein LIGULELESS 1 (LG1).